The following is a 595-amino-acid chain: Pentatricopeptide repeat-containing protein At4g21065 (595 aa).

PPR repeat units follow at residues 84–118 (NVFI…GLVE), 120–154 (DTHT…GFGS), 155–185 (LIYV…MPEK), 186–220 (DLVA…GIKP), 221–255 (DGFT…GLTR), 256–290 (NLHS…NSVS), 291–317 (WTSL…MEST), 323–353 (CEIT…MREE), and 359–389 (RIEH…MPMQ). The interval 394–469 (IWRTLLGACT…VPGHSLVEVG (76 aa)) is type E motif. The segment at 470-500 (NRVHEFLMGDKSHPQSDAIYAKLKEMTGRLR) is type E(+) motif. A type DYW motif region spans residues 501 to 595 (SEGYVPQISN…NGSCSCQDYW (95 aa)).

The protein belongs to the PPR family. PCMP-H subfamily.

The sequence is that of Pentatricopeptide repeat-containing protein At4g21065 (PCMP-H28) from Arabidopsis thaliana (Mouse-ear cress).